The primary structure comprises 160 residues: Bacterial microcompartment shell protein PduK (160 aa).

Positions 11 to 96 (SLGLLEVCGL…PGEGILLAET (86 aa)) constitute a BMC domain.

The protein belongs to the bacterial microcompartments protein family. In terms of assembly, interacts with shell proteins PduA and PduP and assembly protein PduM. Requires Fe cation as cofactor.

It is found in the bacterial microcompartment. It participates in polyol metabolism; 1,2-propanediol degradation. Functionally, a minor shell protein of the bacterial microcompartment (BMC) dedicated to 1,2-propanediol (1,2-PD) degradation. The isolated BMC shell component protein ratio for J:A:B':B:K:T:U is approximately 15:10:7:6:1:1:2. Not required for structural integrity of BMCs nor to mitigate propionaldehyde toxicity, it might be involved in spatial organization of BMCs. Its function is as follows. The 1,2-PD-specific bacterial microcompartment (BMC) concentrates low levels of 1,2-PD catabolic enzymes, concentrates volatile reaction intermediates thus enhancing pathway flux and keeps the level of toxic, mutagenic propionaldehyde low. The polypeptide is Bacterial microcompartment shell protein PduK (Salmonella typhimurium (strain LT2 / SGSC1412 / ATCC 700720)).